A 361-amino-acid polypeptide reads, in one-letter code: RuBisCO accumulation factor 1 (361 aa).

The segment at N16–D197 is N-terminal alpha-helix. The segment at P221–I347 is C-terminal beta-sheet.

This sequence belongs to the RAF family. In terms of assembly, homodimer. Forms an RbcL(8)-Raf1(8) complex. Each Raf1 dimer clamps the exterior of an RbcL dimer, protecting it. The extreme C-terminus (residues 354-361) inserts into the catalytic pocket of RbcL where the Glu-361 forms a salt bridge with 'Lys-202'. This insertion probably contributes to the assembly of RbcL(8). Forms complexes of many stoichiometries with RbcL with and without RbcS. RbcX and Raf1 can bind simultaneously to RbcL.

It localises to the cytoplasm. A major RuBisCO chaperone. Acts after GroEL-GroES chaperonin to fold and/or assemble the large subunit of RuBisCO (ccbL, rbcL). Cooperates with RbcX in RbcL folding, plays the major role in assembly of dimers into RbcL(8)-Raf1(8) intermediate complexes. RbcS replaces Raf1, leading to holoenzyme formation. Functionally, in vitro acts as an antagonist to CcmM35, suggesting it might regulate RuBisCO condensation and decondensation. The protein is RuBisCO accumulation factor 1 of Nostoc sp. (strain PCC 7120 / SAG 25.82 / UTEX 2576).